A 382-amino-acid chain; its full sequence is Queuine tRNA-ribosyltransferase (382 aa).

Catalysis depends on aspartate 93, which acts as the Proton acceptor. Residues 93-97, aspartate 147, glutamine 191, and glycine 218 contribute to the substrate site; that span reads DSGGF. Positions 249–255 are RNA binding; sequence GVGKPED. Aspartate 268 (nucleophile) is an active-site residue. The segment at 273 to 277 is RNA binding; important for wobble base 34 recognition; the sequence is TRNAR. Zn(2+)-binding residues include cysteine 306, cysteine 308, cysteine 311, and histidine 337.

It belongs to the queuine tRNA-ribosyltransferase family. As to quaternary structure, homodimer. Within each dimer, one monomer is responsible for RNA recognition and catalysis, while the other monomer binds to the replacement base PreQ1. Zn(2+) serves as cofactor.

It carries out the reaction 7-aminomethyl-7-carbaguanine + guanosine(34) in tRNA = 7-aminomethyl-7-carbaguanosine(34) in tRNA + guanine. Its pathway is tRNA modification; tRNA-queuosine biosynthesis. Catalyzes the base-exchange of a guanine (G) residue with the queuine precursor 7-aminomethyl-7-deazaguanine (PreQ1) at position 34 (anticodon wobble position) in tRNAs with GU(N) anticodons (tRNA-Asp, -Asn, -His and -Tyr). Catalysis occurs through a double-displacement mechanism. The nucleophile active site attacks the C1' of nucleotide 34 to detach the guanine base from the RNA, forming a covalent enzyme-RNA intermediate. The proton acceptor active site deprotonates the incoming PreQ1, allowing a nucleophilic attack on the C1' of the ribose to form the product. After dissociation, two additional enzymatic reactions on the tRNA convert PreQ1 to queuine (Q), resulting in the hypermodified nucleoside queuosine (7-(((4,5-cis-dihydroxy-2-cyclopenten-1-yl)amino)methyl)-7-deazaguanosine). In Actinobacillus pleuropneumoniae serotype 3 (strain JL03), this protein is Queuine tRNA-ribosyltransferase.